The following is a 68-amino-acid chain: Beta-toxin Cl13 (68 aa).

The 66-residue stretch at 1–66 (KEGYLVDYHT…VWPLPNKRCK (66 aa)) folds into the LCN-type CS-alpha/beta domain. Disulfide bonds link Cys-12–Cys-65, Cys-16–Cys-41, Cys-25–Cys-46, and Cys-29–Cys-48. At Lys-66 the chain carries Lysine amide.

Belongs to the long (4 C-C) scorpion toxin superfamily. Sodium channel inhibitor family. Beta subfamily. As to expression, expressed by the venom gland.

The protein localises to the secreted. Beta toxins bind voltage-independently at site-4 of sodium channels (Nav) and shift the voltage of activation toward more negative potentials thereby affecting sodium channel activation and promoting spontaneous and repetitive firing. Inhibits sodium channels Nav1.4/SCN4A, Nav1.5/SCN5A and Nav1.6/SCN8A. Also has a weak inhibitory effect on Nav1.2/SCN2A. Is lethal to mice. In Centruroides limpidus (Mexican scorpion), this protein is Beta-toxin Cl13.